We begin with the raw amino-acid sequence, 940 residues long: BTB/POZ domain-containing protein FBL11 (940 aa).

Residues 41 to 109 (WDMSEILSYG…LYGYDIEITS (69 aa)) enclose the BTB domain. Residues 155–258 (IQIWSFGLEH…FSLLPLWFIA (104 aa)) enclose the BACK domain.

It functions in the pathway protein modification; protein ubiquitination. Its function is as follows. May act as a substrate-specific adapter of an E3 ubiquitin-protein ligase complex (CUL3-RBX1-BTB) which mediates the ubiquitination and subsequent proteasomal degradation of target proteins. The chain is BTB/POZ domain-containing protein FBL11 (FBL11) from Arabidopsis thaliana (Mouse-ear cress).